Consider the following 227-residue polypeptide: MPYPLQLGFQDATSPIMEELLHFHDHTLMIVFLISSLVLYIITLMLTTKLTHTSTMDAQEVETVWTILPAVILILIALPSLRILYMMDEINNPLLTIKAMGHQWYWSYEYTDYEDLNFDSYMVPTSDLKPGELRLLEVDNRLVLPMELSIRMLISSEDVLHSWAVPSLGLKTDAIPGRLNQATLMATRPGLYYGQCSEICGSNHSFMPIVLELVPLKHFEDWSTSML.

Over 1–14 (MPYPLQLGFQDATS) the chain is Mitochondrial intermembrane. Residues 15-45 (PIMEELLHFHDHTLMIVFLISSLVLYIITLM) form a helical membrane-spanning segment. Residues 46 to 59 (LTTKLTHTSTMDAQ) lie on the Mitochondrial matrix side of the membrane. A helical transmembrane segment spans residues 60–87 (EVETVWTILPAVILILIALPSLRILYMM). Topologically, residues 88-227 (DEINNPLLTI…HFEDWSTSML (140 aa)) are mitochondrial intermembrane. H161, C196, E198, C200, H204, and M207 together coordinate Cu cation. E198 is a binding site for Mg(2+).

The protein belongs to the cytochrome c oxidase subunit 2 family. As to quaternary structure, component of the cytochrome c oxidase (complex IV, CIV), a multisubunit enzyme composed of 14 subunits. The complex is composed of a catalytic core of 3 subunits MT-CO1, MT-CO2 and MT-CO3, encoded in the mitochondrial DNA, and 11 supernumerary subunits COX4I, COX5A, COX5B, COX6A, COX6B, COX6C, COX7A, COX7B, COX7C, COX8 and NDUFA4, which are encoded in the nuclear genome. The complex exists as a monomer or a dimer and forms supercomplexes (SCs) in the inner mitochondrial membrane with NADH-ubiquinone oxidoreductase (complex I, CI) and ubiquinol-cytochrome c oxidoreductase (cytochrome b-c1 complex, complex III, CIII), resulting in different assemblies (supercomplex SCI(1)III(2)IV(1) and megacomplex MCI(2)III(2)IV(2)). Found in a complex with TMEM177, COA6, COX18, COX20, SCO1 and SCO2. Interacts with TMEM177 in a COX20-dependent manner. Interacts with COX20. Interacts with COX16. The cofactor is Cu cation.

It localises to the mitochondrion inner membrane. The enzyme catalyses 4 Fe(II)-[cytochrome c] + O2 + 8 H(+)(in) = 4 Fe(III)-[cytochrome c] + 2 H2O + 4 H(+)(out). Component of the cytochrome c oxidase, the last enzyme in the mitochondrial electron transport chain which drives oxidative phosphorylation. The respiratory chain contains 3 multisubunit complexes succinate dehydrogenase (complex II, CII), ubiquinol-cytochrome c oxidoreductase (cytochrome b-c1 complex, complex III, CIII) and cytochrome c oxidase (complex IV, CIV), that cooperate to transfer electrons derived from NADH and succinate to molecular oxygen, creating an electrochemical gradient over the inner membrane that drives transmembrane transport and the ATP synthase. Cytochrome c oxidase is the component of the respiratory chain that catalyzes the reduction of oxygen to water. Electrons originating from reduced cytochrome c in the intermembrane space (IMS) are transferred via the dinuclear copper A center (CU(A)) of subunit 2 and heme A of subunit 1 to the active site in subunit 1, a binuclear center (BNC) formed by heme A3 and copper B (CU(B)). The BNC reduces molecular oxygen to 2 water molecules using 4 electrons from cytochrome c in the IMS and 4 protons from the mitochondrial matrix. This chain is Cytochrome c oxidase subunit 2 (MT-CO2), found in Dasypus novemcinctus (Nine-banded armadillo).